A 285-amino-acid polypeptide reads, in one-letter code: Probable ribosomal RNA small subunit methyltransferase A (285 aa).

S-adenosyl-L-methionine-binding residues include histidine 29, leucine 31, glycine 58, glutamate 79, aspartate 107, and asparagine 122.

Belongs to the class I-like SAM-binding methyltransferase superfamily. rRNA adenine N(6)-methyltransferase family. RsmA subfamily.

The protein resides in the cytoplasm. Specifically dimethylates two adjacent adenosines in the loop of a conserved hairpin near the 3'-end of 16S rRNA in the 30S particle. May play a critical role in biogenesis of 30S subunits. The chain is Probable ribosomal RNA small subunit methyltransferase A from Haloarcula marismortui (strain ATCC 43049 / DSM 3752 / JCM 8966 / VKM B-1809) (Halobacterium marismortui).